The primary structure comprises 506 residues: Galactose/methyl galactoside import ATP-binding protein MglA (506 aa).

ABC transporter domains follow at residues 14–249 (LEMR…VGRS) and 259–506 (NKPG…SLHL). ATP is bound at residue 46-53 (GENGAGKS).

This sequence belongs to the ABC transporter superfamily. Galactose/methyl galactoside importer (TC 3.A.1.2.3) family. As to quaternary structure, the complex is composed of one ATP-binding protein (MglA), two transmembrane proteins (MglC) and a solute-binding protein (MglB).

The protein localises to the cell inner membrane. The enzyme catalyses D-galactose(out) + ATP + H2O = D-galactose(in) + ADP + phosphate + H(+). It catalyses the reaction methyl beta-D-galactoside(out) + ATP + H2O = methyl beta-D-galactoside(in) + ADP + phosphate + H(+). With respect to regulation, stimulated 3-fold by galactose and inhibited by vanadate, N-ethylmaleimide, and 5-methoxyindole-2-carboxylic acid. Part of the ABC transporter complex MglABC involved in galactose/methyl galactoside import. Responsible for energy coupling to the transport system. The chain is Galactose/methyl galactoside import ATP-binding protein MglA from Salmonella typhimurium (strain LT2 / SGSC1412 / ATCC 700720).